The chain runs to 478 residues: Serine hydroxymethyltransferase (478 aa).

(6S)-5,6,7,8-tetrahydrofolate-binding positions include L161 and 165-167 (GHL). K273 bears the N6-(pyridoxal phosphate)lysine mark. Residue E291 participates in (6S)-5,6,7,8-tetrahydrofolate binding.

The protein belongs to the SHMT family. In terms of assembly, homodimer. Pyridoxal 5'-phosphate is required as a cofactor.

It is found in the cytoplasm. The enzyme catalyses (6R)-5,10-methylene-5,6,7,8-tetrahydrofolate + glycine + H2O = (6S)-5,6,7,8-tetrahydrofolate + L-serine. It participates in one-carbon metabolism; tetrahydrofolate interconversion. The protein operates within amino-acid biosynthesis; glycine biosynthesis; glycine from L-serine: step 1/1. Functionally, catalyzes the reversible interconversion of serine and glycine with tetrahydrofolate (THF) serving as the one-carbon carrier. This reaction serves as the major source of one-carbon groups required for the biosynthesis of purines, thymidylate, methionine, and other important biomolecules. Also exhibits THF-independent aldolase activity toward beta-hydroxyamino acids, producing glycine and aldehydes, via a retro-aldol mechanism. The chain is Serine hydroxymethyltransferase from Salinispora tropica (strain ATCC BAA-916 / DSM 44818 / JCM 13857 / NBRC 105044 / CNB-440).